The sequence spans 362 residues: Cytochrome P450 monooxygenase-like protein avaN (362 aa).

Residues 3–23 (VILAIFIAAAGCLFSSWRIYW) form a helical membrane-spanning segment.

The protein belongs to the cytochrome P450 family.

It is found in the membrane. It participates in secondary metabolite biosynthesis. Cytochrome P450 monooxygenase-like protein; part of the cluster that mediates the biosynthesis of a highly modified cyclo-arginine-tryptophan dipeptide (cRW). The first step of the pathway is perfornmed by the arginine-containing cyclodipeptide synthase (RCPDS) avaA that acts as the scaffold-generating enzyme and is responsible for formation of the cyclo-Arg-Trp (cRW) diketopiperazine. AvaB then acts as a multifunctional flavoenzyme that is responsible for generating the cyclo-Arg-formylkynurenine DKP, which can be deformylated by avaC. AvaB then further catalyzes an additional N-oxidation followed by cyclization and dehydration. The next step is an N-acetylation of the guanidine group catalyzed by the arginine N-acetyltransferase avaD. The roles of the additional enzymes identified within the ava cluster still have to be determined. The protein is Cytochrome P450 monooxygenase-like protein avaN of Aspergillus versicolor.